A 115-amino-acid chain; its full sequence is MIVGIGVDVVDIERFGRQLERTPGLRDRLFVPAERELNTRSLAARFAAKEAVAKVLGAPAGMNWQDCWIGLDQNGPTIQVKGTVLAVAESKGVKRWHLSMSHDGGIATATVLAEG.

Mg(2+) is bound by residues D8 and E50.

Belongs to the P-Pant transferase superfamily. AcpS family. Mg(2+) is required as a cofactor.

The protein resides in the cytoplasm. The enzyme catalyses apo-[ACP] + CoA = holo-[ACP] + adenosine 3',5'-bisphosphate + H(+). Functionally, transfers the 4'-phosphopantetheine moiety from coenzyme A to a Ser of acyl-carrier-protein. This Arthrobacter sp. (strain FB24) protein is Holo-[acyl-carrier-protein] synthase.